The following is a 1937-amino-acid chain: Myosin-2 (1937 aa).

The region spanning 33–82 (DAKTSVFVAEPKESFVKGTIQSREGGKVTVKTDAGATLTVKEDQVFPMNP) is the Myosin N-terminal SH3-like domain. Phosphothreonine occurs at positions 64 and 69. Residues 86-780 (DKIEDMAMMT…LLGLLEEMRD (695 aa)) enclose the Myosin motor domain. K130 bears the N6,N6,N6-trimethyllysine mark. 179–186 (GESGAGKT) provides a ligand contact to ATP. Residue Y387 is modified to Phosphotyrosine. A Phosphothreonine modification is found at T417. Residue S623 is modified to Phosphoserine. The actin-binding stretch occupies residues 657–679 (LNKLMTNLRSTHPHFVRCIIPNE). Pros-methylhistidine is present on H755. The segment at 759–773 (KFGHTKVFFKAGLLG) is actin-binding. An IQ domain is found at 783-812 (LAQIITRTQARCRGFLARVEYQKMVERRES). The stretch at 841–1937 (LLKSAETEKE…EVHTKIISEE (1097 aa)) forms a coiled coil. S1094 is modified (phosphoserine). Disordered regions lie at residues 1124–1145 (IEAERASRAKAEKQRSDLSREL) and 1151–1170 (RLEEAGGATSAQIEMNKKRE). Basic and acidic residues predominate over residues 1126 to 1145 (AERASRAKAEKQRSDLSREL). Phosphoserine is present on residues S1160 and S1235. T1239 carries the phosphothreonine modification. The residue at position 1241 (S1241) is a Phosphoserine. T1253 carries the phosphothreonine modification. A Phosphoserine modification is found at S1259. T1284 carries the phosphothreonine modification. S1290, S1301, and S1304 each carry phosphoserine. Y1462 carries the phosphotyrosine modification. Residue T1465 is modified to Phosphothreonine. S1472 carries the post-translational modification Phosphoserine. Y1490 is modified (phosphotyrosine). A Phosphoserine modification is found at S1493. Phosphothreonine is present on T1499. Phosphoserine is present on S1512. T1515 bears the Phosphothreonine mark. A phosphoserine mark is found at S1540, S1552, S1572, S1712, and S1724. A phosphothreonine mark is found at T1728 and T1734. The residue at position 1737 (S1737) is a Phosphoserine. A disordered region spans residues 1883–1913 (QAEEAEEQSNTNLSKFRKLQHELEEAEERAD).

It belongs to the TRAFAC class myosin-kinesin ATPase superfamily. Myosin family. As to quaternary structure, muscle myosin is a hexameric protein that consists of 2 heavy chain subunits (MHC), 2 alkali light chain subunits (MLC) and 2 regulatory light chain subunits (MLC-2). Interacts with GCSAM.

It is found in the cytoplasm. The protein resides in the myofibril. Myosins are actin-based motor molecules with ATPase activity essential for muscle contraction. The protein is Myosin-2 (MYH2) of Equus caballus (Horse).